The following is a 211-amino-acid chain: Dephospho-CoA kinase (211 aa).

The region spanning 3 to 206 (VIGLTGGIAT…GGRGRRLPNA (204 aa)) is the DPCK domain. ATP is bound at residue 11–16 (ATGKST).

This sequence belongs to the CoaE family.

It is found in the cytoplasm. It catalyses the reaction 3'-dephospho-CoA + ATP = ADP + CoA + H(+). Its pathway is cofactor biosynthesis; coenzyme A biosynthesis; CoA from (R)-pantothenate: step 5/5. Functionally, catalyzes the phosphorylation of the 3'-hydroxyl group of dephosphocoenzyme A to form coenzyme A. This chain is Dephospho-CoA kinase, found in Anaeromyxobacter dehalogenans (strain 2CP-C).